Consider the following 240-residue polypeptide: Demethylmenaquinone methyltransferase (240 aa).

Residues T62, D80, D102–A103, and S119 contribute to the S-adenosyl-L-methionine site.

This sequence belongs to the class I-like SAM-binding methyltransferase superfamily. MenG/UbiE family.

It carries out the reaction a 2-demethylmenaquinol + S-adenosyl-L-methionine = a menaquinol + S-adenosyl-L-homocysteine + H(+). The protein operates within quinol/quinone metabolism; menaquinone biosynthesis; menaquinol from 1,4-dihydroxy-2-naphthoate: step 2/2. Methyltransferase required for the conversion of demethylmenaquinol (DMKH2) to menaquinol (MKH2). This chain is Demethylmenaquinone methyltransferase, found in Beutenbergia cavernae (strain ATCC BAA-8 / DSM 12333 / CCUG 43141 / JCM 11478 / NBRC 16432 / NCIMB 13614 / HKI 0122).